The following is a 640-amino-acid chain: Probable potassium transport system protein Kup 2 (640 aa).

A disordered region spans residues 1–20 (MTADIAATPAETPATNGHGD). 12 consecutive transmembrane segments (helical) span residues 30 to 50 (LTLG…LYAL), 71 to 91 (VVSL…VVIL), 117 to 137 (ASII…DAVI), 155 to 175 (AAFD…LFAV), 183 to 203 (VAAF…IAAF), 224 to 244 (FMLH…LAVT), 265 to 285 (WLFV…ALVI), 294 to 314 (PFFL…ATVA), 363 to 383 (LLLV…ALAS), 385 to 405 (YGIS…VVIW), 410 to 430 (WSPI…LTFL), and 437 to 457 (VLEG…LMYT).

It belongs to the HAK/KUP transporter (TC 2.A.72) family.

It localises to the cell inner membrane. It catalyses the reaction K(+)(in) + H(+)(in) = K(+)(out) + H(+)(out). Transport of potassium into the cell. Likely operates as a K(+):H(+) symporter. The chain is Probable potassium transport system protein Kup 2 from Bradyrhizobium sp. (strain ORS 278).